A 29-amino-acid chain; its full sequence is Cytochrome b6-f complex subunit 8 (29 aa).

A helical membrane pass occupies residues 3 to 23 (ILSISWAFLMVVFTFSLSLVV).

It belongs to the PetN family. As to quaternary structure, the 4 large subunits of the cytochrome b6-f complex are cytochrome b6, subunit IV (17 kDa polypeptide, PetD), cytochrome f and the Rieske protein, while the 4 small subunits are PetG, PetL, PetM and PetN. The complex functions as a dimer.

The protein localises to the plastid. Its subcellular location is the chloroplast thylakoid membrane. Its function is as follows. Component of the cytochrome b6-f complex, which mediates electron transfer between photosystem II (PSII) and photosystem I (PSI), cyclic electron flow around PSI, and state transitions. The protein is Cytochrome b6-f complex subunit 8 of Chara vulgaris (Common stonewort).